Consider the following 123-residue polypeptide: Ribonuclease P protein component (123 aa).

This sequence belongs to the RnpA family. Consists of a catalytic RNA component (M1 or rnpB) and a protein subunit.

It carries out the reaction Endonucleolytic cleavage of RNA, removing 5'-extranucleotides from tRNA precursor.. In terms of biological role, RNaseP catalyzes the removal of the 5'-leader sequence from pre-tRNA to produce the mature 5'-terminus. It can also cleave other RNA substrates such as 4.5S RNA. The protein component plays an auxiliary but essential role in vivo by binding to the 5'-leader sequence and broadening the substrate specificity of the ribozyme. The protein is Ribonuclease P protein component of Streptococcus pneumoniae (strain Hungary19A-6).